The primary structure comprises 400 residues: Arabinan endo-1,5-alpha-L-arabinosidase B (400 aa).

The N-terminal stretch at 1-16 (MAVIFVLFFLVSMALS) is a signal peptide. N-linked (GlcNAc...) asparagine glycosylation is present at N24. The active-site Proton acceptor is the D70. An N-linked (GlcNAc...) asparagine glycan is attached at N184. The active-site Proton donor is E277. N-linked (GlcNAc...) asparagine glycosylation occurs at N372.

It belongs to the glycosyl hydrolase 43 family.

Its subcellular location is the secreted. It carries out the reaction Endohydrolysis of (1-&gt;5)-alpha-arabinofuranosidic linkages in (1-&gt;5)-arabinans.. The protein operates within glycan metabolism; L-arabinan degradation. Its function is as follows. Endo-1,5-alpha-L-arabinanase involved in degradation of pectin. Its preferred substrate is linear 1,5-alpha-L-arabinan. In Emericella nidulans (strain FGSC A4 / ATCC 38163 / CBS 112.46 / NRRL 194 / M139) (Aspergillus nidulans), this protein is Arabinan endo-1,5-alpha-L-arabinosidase B (abnB).